A 118-amino-acid chain; its full sequence is Large ribosomal subunit protein bL20 (118 aa).

The protein belongs to the bacterial ribosomal protein bL20 family.

In terms of biological role, binds directly to 23S ribosomal RNA and is necessary for the in vitro assembly process of the 50S ribosomal subunit. It is not involved in the protein synthesizing functions of that subunit. This chain is Large ribosomal subunit protein bL20, found in Francisella tularensis subsp. holarctica (strain FTNF002-00 / FTA).